The following is a 457-amino-acid chain: V-type ATP synthase beta chain (457 aa).

Belongs to the ATPase alpha/beta chains family.

Functionally, produces ATP from ADP in the presence of a proton gradient across the membrane. The V-type beta chain is a regulatory subunit. In Clostridioides difficile (strain 630) (Peptoclostridium difficile), this protein is V-type ATP synthase beta chain.